Consider the following 359-residue polypeptide: Phosphoserine aminotransferase (359 aa).

Arg41 is a binding site for L-glutamate. Pyridoxal 5'-phosphate-binding positions include Ala75–Ser76, Trp99, Thr147, Asp166, and Gln189. The residue at position 190 (Lys190) is an N6-(pyridoxal phosphate)lysine. Asn231–Thr232 is a binding site for pyridoxal 5'-phosphate.

Belongs to the class-V pyridoxal-phosphate-dependent aminotransferase family. SerC subfamily. In terms of assembly, homodimer. Pyridoxal 5'-phosphate serves as cofactor.

It localises to the cytoplasm. It carries out the reaction O-phospho-L-serine + 2-oxoglutarate = 3-phosphooxypyruvate + L-glutamate. The enzyme catalyses 4-(phosphooxy)-L-threonine + 2-oxoglutarate = (R)-3-hydroxy-2-oxo-4-phosphooxybutanoate + L-glutamate. It participates in amino-acid biosynthesis; L-serine biosynthesis; L-serine from 3-phospho-D-glycerate: step 2/3. It functions in the pathway cofactor biosynthesis; pyridoxine 5'-phosphate biosynthesis; pyridoxine 5'-phosphate from D-erythrose 4-phosphate: step 3/5. Functionally, catalyzes the reversible conversion of 3-phosphohydroxypyruvate to phosphoserine and of 3-hydroxy-2-oxo-4-phosphonooxybutanoate to phosphohydroxythreonine. The chain is Phosphoserine aminotransferase from Azobacteroides pseudotrichonymphae genomovar. CFP2.